Reading from the N-terminus, the 289-residue chain is Nodulation protein NolT (289 aa).

Residues methionine 1 to serine 33 form the signal peptide. Cysteine 34 is lipidated: N-palmitoyl cysteine. A lipid anchor (S-diacylglycerol cysteine) is attached at cysteine 34. Residues valine 233–leucine 253 form a helical membrane-spanning segment.

Belongs to the YscJ lipoprotein family.

It is found in the cell outer membrane. The chain is Nodulation protein NolT (nolT) from Sinorhizobium fredii (strain NBRC 101917 / NGR234).